The following is a 358-amino-acid chain: tRNA-specific 2-thiouridylase MnmA (358 aa).

ATP is bound by residues 6–13 and Met32; that span reads ALSGGVDS. Cys103 acts as the Nucleophile in catalysis. Cysteines 103 and 201 form a disulfide. Gly127 serves as a coordination point for ATP. The segment at 151–153 is interaction with tRNA; that stretch reads KDQ. The Cysteine persulfide intermediate role is filled by Cys201.

It belongs to the MnmA/TRMU family.

It localises to the cytoplasm. It carries out the reaction S-sulfanyl-L-cysteinyl-[protein] + uridine(34) in tRNA + AH2 + ATP = 2-thiouridine(34) in tRNA + L-cysteinyl-[protein] + A + AMP + diphosphate + H(+). Functionally, catalyzes the 2-thiolation of uridine at the wobble position (U34) of tRNA, leading to the formation of s(2)U34. The protein is tRNA-specific 2-thiouridylase MnmA of Thermotoga sp. (strain RQ2).